The following is a 900-amino-acid chain: Phosphoenolpyruvate carboxylase (900 aa).

Active-site residues include H140 and K568.

This sequence belongs to the PEPCase type 1 family. Requires Mg(2+) as cofactor.

It carries out the reaction oxaloacetate + phosphate = phosphoenolpyruvate + hydrogencarbonate. Its function is as follows. Forms oxaloacetate, a four-carbon dicarboxylic acid source for the tricarboxylic acid cycle. This is Phosphoenolpyruvate carboxylase from Neisseria meningitidis serogroup C / serotype 2a (strain ATCC 700532 / DSM 15464 / FAM18).